The sequence spans 432 residues: Metacaspase-1 (432 aa).

Residues 1 to 11 (MEVMDHHHHTS) show a composition bias toward basic residues. Disordered stretches follow at residues 1-21 (MEVM…TTRR) and 41-87 (PQPG…PNAP). The segment covering 12 to 21 (STRPNPTTRR) has biased composition (low complexity). Positions 46–74 (GAPPPQGGYGYPQPPPPQQPYGYSQPPPQ) are enriched in pro residues. Active-site residues include H223 and C279.

This sequence belongs to the peptidase C14B family.

Its function is as follows. Involved in cell death (apoptosis). The polypeptide is Metacaspase-1 (casA) (Sclerotinia sclerotiorum (strain ATCC 18683 / 1980 / Ss-1) (White mold)).